The following is a 376-amino-acid chain: Gibberellic acid methyltransferase 1 (376 aa).

S-adenosyl-L-homocysteine is bound by residues Tyr22, Cys64, Asn69, Asp104, Leu105, Ser136, and Phe137. Trp158 serves as a coordination point for gibberellin A9. Positions 175, 179, 265, 266, 268, and 269 each coordinate Mg(2+).

The protein belongs to the methyltransferase superfamily. Type-7 methyltransferase family. SABATH subfamily. It depends on Mg(2+) as a cofactor. Expressed in siliques, developing seeds, anthers and germinating seeds. Not detected in leaves, stems, flowers and roots.

The catalysed reaction is gibberellin A9 + S-adenosyl-L-methionine = O-methyl gibberellin A9 + S-adenosyl-L-homocysteine. With respect to regulation, up-regulated by K(+) and NH(4+), down-regulated by Zn(2+), Cu(2+), Fe(2+) and Fe(3+). Methylates the carboxyl group of several gibberellins (GAs). Substrate preference is GA9 &gt; GA20 &gt; GA3 &gt; GA4 &gt; GA34 &gt; GA51 &gt; GA1 &gt; GA19 &gt; GA12. No activity with diterpenes abietic acid and ent-kaurenoic acid. This Arabidopsis thaliana (Mouse-ear cress) protein is Gibberellic acid methyltransferase 1 (GAMT1).